Consider the following 524-residue polypeptide: ORC1-type DNA replication protein 4 (524 aa).

The span at 1-23 (MTDKSNNPAPASDPSTTETSNDA) shows a compositional bias: polar residues. Residues 1–67 (MTDKSNNPAP…DDPSDEASRG (67 aa)) form a disordered region. ATP-binding positions include 128 to 132 (TGKTA), Y325, and R337.

Belongs to the CDC6/cdc18 family.

Its function is as follows. Involved in regulation of DNA replication. The chain is ORC1-type DNA replication protein 4 (cdc6d) from Haloarcula marismortui (strain ATCC 43049 / DSM 3752 / JCM 8966 / VKM B-1809) (Halobacterium marismortui).